A 612-amino-acid polypeptide reads, in one-letter code: Dihydroxy-acid dehydratase (612 aa).

Residue Asp81 participates in Mg(2+) binding. Cys122 provides a ligand contact to [2Fe-2S] cluster. Mg(2+) is bound by residues Asp123 and Lys124. An N6-carboxylysine modification is found at Lys124. Residue Cys195 participates in [2Fe-2S] cluster binding. Glu491 contacts Mg(2+). Residue Ser517 is the Proton acceptor of the active site.

Belongs to the IlvD/Edd family. In terms of assembly, homodimer. It depends on [2Fe-2S] cluster as a cofactor. Mg(2+) is required as a cofactor.

It catalyses the reaction (2R)-2,3-dihydroxy-3-methylbutanoate = 3-methyl-2-oxobutanoate + H2O. It carries out the reaction (2R,3R)-2,3-dihydroxy-3-methylpentanoate = (S)-3-methyl-2-oxopentanoate + H2O. Its pathway is amino-acid biosynthesis; L-isoleucine biosynthesis; L-isoleucine from 2-oxobutanoate: step 3/4. It functions in the pathway amino-acid biosynthesis; L-valine biosynthesis; L-valine from pyruvate: step 3/4. Functionally, functions in the biosynthesis of branched-chain amino acids. Catalyzes the dehydration of (2R,3R)-2,3-dihydroxy-3-methylpentanoate (2,3-dihydroxy-3-methylvalerate) into 2-oxo-3-methylpentanoate (2-oxo-3-methylvalerate) and of (2R)-2,3-dihydroxy-3-methylbutanoate (2,3-dihydroxyisovalerate) into 2-oxo-3-methylbutanoate (2-oxoisovalerate), the penultimate precursor to L-isoleucine and L-valine, respectively. The protein is Dihydroxy-acid dehydratase of Buchnera aphidicola subsp. Baizongia pistaciae (strain Bp).